The following is a 770-amino-acid chain: Cyclopiane-type diterpene synthase (770 aa).

Residues 5-335 form a terpene cyclase region; it reads ITDEYAVGID…VPRYCKVDRN (331 aa). Positions 97 and 101 each coordinate Mg(2+). Residues Asp97, Asp101, 190–193, Asn234, 238–242, and 328–329 each bind substrate; these read RIVD, SWDKE, and RY. Residues 97–101 carry the DDXXD 1 motif; that stretch reads DDETD. Positions 234 to 242 match the NSE/DTE motif; it reads NDLFSWDKE. Residues 336-720 are prenyltransferase; it reads PYKDHLEKYG…WALRLLIMKL (385 aa). The tract at residues 371–397 is disordered; that stretch reads NQLKEPSSSTYKTHFSPLEPNPGPEQT. Polar residues predominate over residues 374-383; that stretch reads KEPSSSTYKT. Isopentenyl diphosphate contacts are provided by Lys423, Arg426, and His455. Residues Asp462 and Asp466 each coordinate Mg(2+). Residues 462–466 carry the DDXXD 2 motif; it reads DDIQD. Residue Arg471 coordinates dimethylallyl diphosphate. Arg472 is an isopentenyl diphosphate binding site. Lys548, Thr549, Gln584, Asn591, Lys620, and Lys630 together coordinate dimethylallyl diphosphate.

This sequence in the N-terminal section; belongs to the terpene synthase family. In the C-terminal section; belongs to the FPP/GGPP synthase family. In terms of assembly, hexamer. The cofactor is Mg(2+).

The catalysed reaction is isopentenyl diphosphate + (2E,6E)-farnesyl diphosphate = (2E,6E,10E)-geranylgeranyl diphosphate + diphosphate. It carries out the reaction (2E,6E,10E)-geranylgeranyl diphosphate + H2O = (+)-penichrysol + diphosphate. Its pathway is secondary metabolite biosynthesis; terpenoid biosynthesis. In terms of biological role, bifunctional terpene synthase converts dimethylallyl diphosphate (DMAPP) and isopentenyl diphosphate (IPP) into a cyclopiane-type diterpene. The C-terminal prenyltransferase (PT) domain of PcCS catalyzes formation of geranylgeranyl pyrophosphate (GGPP), whereas the N-terminal terpene cyclase (TC) domain catalyzes the cyclization of GGPP to the cyclopiane-type diterpene penichrysol. This Penicillium chrysogenum (Penicillium notatum) protein is Cyclopiane-type diterpene synthase.